Reading from the N-terminus, the 514-residue chain is GTPase Obg (514 aa).

The Obg domain occupies 2–159 (ATFVDRVTVH…GDILLELKTV (158 aa)). The tract at residues 62-88 (RRPHRSSGNGGFGMGDHRSGHTGEDLE) is disordered. Positions 76–85 (GDHRSGHTGE) are enriched in basic and acidic residues. In terms of domain architecture, OBG-type G spans 160 to 336 (ADIALVGYPS…LSFALAELVE (177 aa)). Residues 166-173 (GYPSAGKS), 191-195 (FTTLH), 212-215 (DVPG), 288-291 (NKID), and 317-319 (STV) contribute to the GTP site. Residues S173 and T193 each contribute to the Mg(2+) site. In terms of domain architecture, OCT spans 356–440 (PKTVDDSGFV…ENGVVFDWEP (85 aa)).

The protein belongs to the TRAFAC class OBG-HflX-like GTPase superfamily. OBG GTPase family. Monomer. The cofactor is Mg(2+).

The protein resides in the cytoplasm. Functionally, an essential GTPase which binds GTP, GDP and possibly (p)ppGpp with moderate affinity, with high nucleotide exchange rates and a fairly low GTP hydrolysis rate. Plays a role in control of the cell cycle, stress response, ribosome biogenesis and in those bacteria that undergo differentiation, in morphogenesis control. The chain is GTPase Obg from Leifsonia xyli subsp. xyli (strain CTCB07).